Here is a 290-residue protein sequence, read N- to C-terminus: 4-hydroxy-tetrahydrodipicolinate synthase (290 aa).

Position 42 (threonine 42) interacts with pyruvate. Tyrosine 129 acts as the Proton donor/acceptor in catalysis. Residue lysine 157 is the Schiff-base intermediate with substrate of the active site. Isoleucine 198 contacts pyruvate.

The protein belongs to the DapA family. As to quaternary structure, homotetramer; dimer of dimers.

It is found in the cytoplasm. The enzyme catalyses L-aspartate 4-semialdehyde + pyruvate = (2S,4S)-4-hydroxy-2,3,4,5-tetrahydrodipicolinate + H2O + H(+). The protein operates within amino-acid biosynthesis; L-lysine biosynthesis via DAP pathway; (S)-tetrahydrodipicolinate from L-aspartate: step 3/4. Catalyzes the condensation of (S)-aspartate-beta-semialdehyde [(S)-ASA] and pyruvate to 4-hydroxy-tetrahydrodipicolinate (HTPA). This is 4-hydroxy-tetrahydrodipicolinate synthase from Chlamydia felis (strain Fe/C-56) (Chlamydophila felis).